The primary structure comprises 332 residues: Endo-1,4-beta-xylanase B (332 aa).

The GH10 domain maps to 2–331 (STEIPSLSAS…KDSFWRIIGQ (330 aa)). The Proton donor role is filled by glutamate 134. Catalysis depends on glutamate 241, which acts as the Nucleophile.

The protein belongs to the glycosyl hydrolase 10 (cellulase F) family. Cytoplasmic xylanase subfamily.

The protein localises to the cytoplasm. It carries out the reaction Endohydrolysis of (1-&gt;4)-beta-D-xylosidic linkages in xylans.. It functions in the pathway glycan degradation; xylan degradation. With respect to regulation, completely inhibited by Ag(2+), Cu(2+), Hg(2+), Mn(2+), Pb(2+) and Sn(2+). Strongly inhibited by Fe(2+) and Zn(2+). Co(2+) and Ni(2+) cause little inhibition while Ca(2+) and Mg(2+) do not affect enzyme activity, and Ba(2+) produces a small stimulating effect. Irreversibly inactivated by SDS in vitro. In terms of biological role, plays a role in plant xylan biodegradation, probably via the hydrolysis of short xylooligosaccharides resulting from extracellular xylan hydrolysis, once they have been transported inside cells. Shows similar activity on xylans of different rate of arabinose or methylglucuronic substitution. Also displays high activity on aryl-xylosides. Is active on xylotetraose and xylotriose, but does not hydrolyze xylobiose, indicating that XynB is a xylanase and not a beta-xylosidase. This chain is Endo-1,4-beta-xylanase B (xynB), found in Paenibacillus barcinonensis.